The primary structure comprises 229 residues: Protein N-lysine methyltransferase METTL21D (229 aa).

A2 is subject to N-acetylalanine. S8 carries the phosphoserine modification. Residues W43, 75 to 77 (GSG), D96, W126, A143, and Y148 contribute to the S-adenosyl-L-methionine site.

It belongs to the methyltransferase superfamily. METTL21 family. In terms of assembly, interacts with ALKBH6. Interacts with ASPSCR1 and UBXN6; interaction with ASPSCR1, but not with UBXN6, enhances VCP methylation.

The protein resides in the cytoplasm. The enzyme catalyses L-lysyl-[protein] + 3 S-adenosyl-L-methionine = N(6),N(6),N(6)-trimethyl-L-lysyl-[protein] + 3 S-adenosyl-L-homocysteine + 3 H(+). In terms of biological role, protein N-lysine methyltransferase that specifically trimethylates 'Lys-315' of VCP/p97; this modification may decrease VCP ATPase activity. The polypeptide is Protein N-lysine methyltransferase METTL21D (VCPKMT) (Homo sapiens (Human)).